Reading from the N-terminus, the 453-residue chain is Ribulose bisphosphate carboxylase large chain (453 aa).

Residues 1-2 constitute a propeptide that is removed on maturation; sequence MS. P3 is modified (N-acetylproline). The residue at position 14 (K14) is an N6,N6,N6-trimethyllysine. N123 and T173 together coordinate substrate. K175 serves as the catalytic Proton acceptor. K177 contributes to the substrate binding site. Mg(2+) contacts are provided by K201, D203, and E204. Position 201 is an N6-carboxylysine (K201). H294 (proton acceptor) is an active-site residue. 3 residues coordinate substrate: R295, H327, and S379.

Belongs to the RuBisCO large chain family. Type I subfamily. Heterohexadecamer of 8 large chains and 8 small chains; disulfide-linked. The disulfide link is formed within the large subunit homodimers. It depends on Mg(2+) as a cofactor. Post-translationally, the disulfide bond which can form in the large chain dimeric partners within the hexadecamer appears to be associated with oxidative stress and protein turnover.

It localises to the plastid. Its subcellular location is the chloroplast. The catalysed reaction is 2 (2R)-3-phosphoglycerate + 2 H(+) = D-ribulose 1,5-bisphosphate + CO2 + H2O. It catalyses the reaction D-ribulose 1,5-bisphosphate + O2 = 2-phosphoglycolate + (2R)-3-phosphoglycerate + 2 H(+). In terms of biological role, ruBisCO catalyzes two reactions: the carboxylation of D-ribulose 1,5-bisphosphate, the primary event in carbon dioxide fixation, as well as the oxidative fragmentation of the pentose substrate in the photorespiration process. Both reactions occur simultaneously and in competition at the same active site. In Valantia muralis (Wall valantia), this protein is Ribulose bisphosphate carboxylase large chain.